An 86-amino-acid polypeptide reads, in one-letter code: AKEKGGKLTAGLAAGGHWNPNKAPHHGFPWSDDAHLGDLPALTVLHDGTSTNPVLAPRLKKLDEIKGRSLMIHEGGDNHSDHPAPL.

The interval 1–26 (AKEKGGKLTAGLAAGGHWNPNKAPHH) is disordered. The span at 7–16 (KLTAGLAAGG) shows a compositional bias: low complexity. Position 17 (His17) interacts with Cu cation. Residues His17, His26, His35, and Asp38 each contribute to the Zn(2+) site. Residue His73 participates in Cu cation binding.

This sequence belongs to the Cu-Zn superoxide dismutase family. In terms of assembly, homodimer. It depends on Cu cation as a cofactor. Zn(2+) is required as a cofactor.

The protein localises to the periplasm. It catalyses the reaction 2 superoxide + 2 H(+) = H2O2 + O2. Destroys radicals which are normally produced within the cells and which are toxic to biological systems. This is Superoxide dismutase [Cu-Zn] (sodC) from Mannheimia haemolytica (Pasteurella haemolytica).